The primary structure comprises 977 residues: Poly(ADP-ribose) glycohydrolase (977 aa).

The segment at 1–69 (MSAGPGCEPC…LGRAGQHRGS (69 aa)) is disordered. Residues 1 to 457 (MSAGPGCEPC…LSPDKKWLGT (457 aa)) form an A-domain region. The short motif at 10–16 (CTKRPRW) is the Nuclear localization signal element. Residues 17–29 (DAAATSPPAASDA) show a composition bias toward low complexity. Ser69 bears the Phosphoserine mark. Residues 77–84 (QKTITSWM) carry the PIP-box (PCNA interacting peptide) motif. A phosphoserine mark is found at Ser138 and Ser198. A disordered region spans residues 184-407 (SNANVDQSSP…CRNSKQHGRK (224 aa)). 2 stretches are compositionally biased toward basic and acidic residues: residues 192-207 (SPKD…ESRD) and 223-234 (TMEDEQGREARS). Phosphothreonine is present on Thr200. Phosphoserine is present on residues Ser262, Ser265, Ser287, Ser292, Ser299, Ser303, and Ser317. The segment covering 280–291 (NRLNRQESSLGN) has biased composition (polar residues). The span at 317–332 (SEADEETSPGFDEQED) shows a compositional bias: acidic residues. Residues 333 to 343 (SSSAQTANKPS) show a composition bias toward polar residues. N6-acetyllysine is present on Lys341. Positions 346–356 (QPREADTELRK) are enriched in basic and acidic residues. Position 449 is a phosphoserine (Ser449). Residues 611-796 (QPIPLLKQKM…TEQYSEYTGY (186 aa)) form a catalytic region. 727-728 (IE) lines the substrate pocket. Asp738 is an active-site residue. Residues Asn741 and Gln755 each contribute to the substrate site. Catalysis depends on residues Glu756 and Glu757. Substrate contacts are provided by residues Tyr796 and 870 to 875 (NWGCGA).

The protein belongs to the poly(ADP-ribose) glycohydrolase family. Interacts with PCNA. Interacts with NUDT5.

Its subcellular location is the nucleus. The catalysed reaction is [(1''-&gt;2')-ADP-alpha-D-ribose](n) + H2O = [(1''-&gt;2')-ADP-alpha-D-ribose](n-1) + ADP-D-ribose. In terms of biological role, poly(ADP-ribose) glycohydrolase that degrades poly(ADP-ribose) by hydrolyzing the ribose-ribose bonds present in poly(ADP-ribose). PARG acts both as an endo- and exoglycosidase, releasing poly(ADP-ribose) of different length as well as ADP-ribose monomers. It is however unable to cleave the ester bond between the terminal ADP-ribose and ADP-ribosylated residues, leaving proteins that are mono-ADP-ribosylated. Poly(ADP-ribose) is synthesized after DNA damage is only present transiently and is rapidly degraded by PARG. Required to prevent detrimental accumulation of poly(ADP-ribose) upon prolonged replicative stress, while it is not required for recovery from transient replicative stress. Responsible for the prevalence of mono-ADP-ribosylated proteins in cells, thanks to its ability to degrade poly(ADP-ribose) without cleaving the terminal protein-ribose bond. Required for retinoid acid-dependent gene transactivation, probably by removing poly(ADP-ribose) from histone demethylase KDM4D, allowing chromatin derepression at RAR-dependent gene promoters. Involved in the synthesis of ATP in the nucleus, together with PARP1, NMNAT1 and NUDT5. Nuclear ATP generation is required for extensive chromatin remodeling events that are energy-consuming. In Bos taurus (Bovine), this protein is Poly(ADP-ribose) glycohydrolase.